The chain runs to 152 residues: Large ribosomal subunit protein bL9 (152 aa).

Belongs to the bacterial ribosomal protein bL9 family.

In terms of biological role, binds to the 23S rRNA. The protein is Large ribosomal subunit protein bL9 of Synechocystis sp. (strain ATCC 27184 / PCC 6803 / Kazusa).